Here is a 440-residue protein sequence, read N- to C-terminus: Protein root UVB sensitive 3 (440 aa).

3 helical membrane-spanning segments follow: residues 109–129 (IGAT…GILF), 154–174 (IGML…VVVC), and 232–252 (FTSG…VFHM).

The protein belongs to the RUS1 family.

The protein resides in the membrane. This is Protein root UVB sensitive 3 from Arabidopsis thaliana (Mouse-ear cress).